Reading from the N-terminus, the 230-residue chain is Ureidoacrylate amidohydrolase RutB (230 aa).

The active-site Proton acceptor is D24. Residue K133 is part of the active site. C166 serves as the catalytic Nucleophile.

Belongs to the isochorismatase family. RutB subfamily.

It catalyses the reaction (Z)-3-ureidoacrylate + H2O + H(+) = (Z)-3-aminoacrylate + NH4(+) + CO2. The catalysed reaction is (Z)-3-ureidoacrylate + H2O = (Z)-3-aminoacrylate + carbamate + H(+). It carries out the reaction (Z)-2-methylureidoacrylate + H2O + H(+) = (Z)-2-methylaminoacrylate + NH4(+) + CO2. Functionally, hydrolyzes ureidoacrylate to form aminoacrylate and carbamate. The carbamate hydrolyzes spontaneously, thereby releasing one of the nitrogen atoms of the pyrimidine ring as ammonia and one of its carbon atoms as CO2. In Escherichia coli O103:H2 (strain 12009 / EHEC), this protein is Ureidoacrylate amidohydrolase RutB.